The sequence spans 268 residues: Interleukin-1 beta (268 aa).

Residues 1–116 (MATVPELNCE…WDDDDLLVCD (116 aa)) constitute a propeptide that is removed on maturation.

This sequence belongs to the IL-1 family. As to quaternary structure, monomer. In its precursor form, weakly interacts with full-length MEFV; the mature cytokine does not interact at all. Interacts with integrins ITGAV:ITGBV and ITGA5:ITGB1; integrin-binding is required for IL1B signaling. Interacts with cargo receptor TMED10; the interaction is direct and is required for the secretion of IL1B mature form. Interacts with HSP90AB1; the interaction facilitates cargo translocation into the ERGIC. Interacts with HSP90B1; the interaction facilitates cargo translocation into the ERGIC.

The protein resides in the cytoplasm. It is found in the cytosol. It localises to the secreted. The protein localises to the lysosome. Its subcellular location is the extracellular exosome. Functionally, potent pro-inflammatory cytokine. Initially discovered as the major endogenous pyrogen, induces prostaglandin synthesis, neutrophil influx and activation, T-cell activation and cytokine production, B-cell activation and antibody production, and fibroblast proliferation and collagen production. Promotes Th17 differentiation of T-cells. Synergizes with IL12/interleukin-12 to induce IFNG synthesis from T-helper 1 (Th1) cells. Plays a role in angiogenesis by inducing VEGF production synergistically with TNF and IL6. Involved in transduction of inflammation downstream of pyroptosis: its mature form is specifically released in the extracellular milieu by passing through the gasdermin-D (GSDMD) pore. The protein is Interleukin-1 beta of Rattus norvegicus (Rat).